A 626-amino-acid chain; its full sequence is MELETIEYNKSFNICENGDSKGVQLTFKNISYKVENKNYNKNKKEKNKNKIDPEFVNLDNKTENSNEKEITILYNVGGVIEKGELVALMGPSGSGKSTLLDILAQRKSTGKITGQLLVNGKEIGEAYKKYCSYVTQEDVLLQTYTVFETLKFYADLKLPGVSEIEKIKRVEKVIEDVGLTLKRDSRVGGVLAGGVAVTGLSGGEKRRVSIGCGLITNPSLIFLDEPTSGLDSVAALQIMKTLLNLTLKGVTVICSIHQPRPEIFQLINKVMVIIKGKMIYSGSNILEYFESLGYPCPNNTNPADFCLDSAVEIGEGERYTEICNQWENKWENQLTNEIEYPSLNVDIPKTTSWVYQYWILLNREWRGFIRNKGNALSRVITAIVIGALFGSCFAGLKESDADVQKIMGTLFFLTTGLMLSPFSMITLFLSGRQLFNSERASKIYHSFPYFLSMITVELTIEFFVTLVEVTVCYMLARLRMDAGRFFFAVLVYSFIHSLSTFFISSLANLTGTSDLTFSYASSLSVVFMLFAGFYVPTNELPRAFGWLHWVNPAFYGYSSVVINQFEDLQLKCTDEPCKFTNGNQVIEYYGIEDWTRGGSFGVLVAWATFFYSLSYFALHFLHREKR.

One can recognise an ABC transporter domain in the interval 56–300; sequence VNLDNKTENS…SLGYPCPNNT (245 aa). 90–97 serves as a coordination point for ATP; it reads GPSGSGKS. Positions 373-621 constitute an ABC transmembrane type-2 domain; it reads GNALSRVITA…SLSYFALHFL (249 aa). Transmembrane regions (helical) follow at residues 376-396, 409-429, 447-467, 485-505, 515-535, 543-563, and 600-620; these read LSRV…FAGL, TLFF…TLFL, FPYF…VTLV, FFFA…FISS, LTFS…GFYV, AFGW…VVIN, and FGVL…ALHF.

The protein belongs to the ABC transporter superfamily. ABCG family. Eye pigment precursor importer (TC 3.A.1.204) subfamily.

It localises to the membrane. The chain is ABC transporter G family member 8 (abcG8) from Dictyostelium discoideum (Social amoeba).